A 116-amino-acid chain; its full sequence is Chondroitin proteoglycan 7 (116 aa).

The N-terminal stretch at 1 to 19 is a signal peptide; the sequence is MQTITILALIACVAVPIFA. The segment at 29 to 102 is disordered; it reads DVVESSGEGS…NAVVASDSPK (74 aa). 2 stretches are compositionally biased toward low complexity: residues 32–41 and 48–58; these read ESSGEGSGES and VESSGEGSGES. O-linked (Xyl...) (chondroitin sulfate) serine glycosylation is found at serine 68, serine 72, serine 76, serine 84, and serine 88.

This is Chondroitin proteoglycan 7 from Caenorhabditis elegans.